A 586-amino-acid chain; its full sequence is Serine/threonine-protein kinase TDA1 (586 aa).

The disordered stretch occupies residues 1-26; it reads MTTASSSASQLQQRLPEEKPWPQLSG. The 313-residue stretch at 39-351 folds into the Protein kinase domain; sequence VTNHNSLGDG…AKNLKQHPFI (313 aa). ATP is bound by residues 45 to 53 and K68; that span reads LGDGNFSVV. The Proton acceptor role is filled by D180. The disordered stretch occupies residues 503 to 524; that stretch reads TTPESRSNFNTPKTLSRQGSST. Phosphothreonine is present on T504. S509 and S518 each carry phosphoserine. T538 is subject to Phosphothreonine. S578 is subject to Phosphoserine.

Belongs to the protein kinase superfamily. Ser/Thr protein kinase family. As to quaternary structure, interacts with RIM11.

The protein localises to the cytoplasm. It is found in the nucleus. The catalysed reaction is L-seryl-[protein] + ATP = O-phospho-L-seryl-[protein] + ADP + H(+). It catalyses the reaction L-threonyl-[protein] + ATP = O-phospho-L-threonyl-[protein] + ADP + H(+). Functionally, serine/threonine protein kinase shown to have protein phosphorylation activity in vitro. In Saccharomyces cerevisiae (strain ATCC 204508 / S288c) (Baker's yeast), this protein is Serine/threonine-protein kinase TDA1 (TDA1).